The following is a 383-amino-acid chain: MNSTLSSQVENHSIYYNFSEKNSQFLAFENDDCHLPLAMIFTLALAYGAVIILGVSGNLALIIIILKQKEMRNVTNILIVNLSFSDLLVAIMCLPFTFVYTLMDHWVFGEVMCKLNPFVQCVSITVSIFSLVLIAVERHQLIINPRGWRPSNRHAYVGIAVIWVLAVASSLPFLIYQVLTDEPFQNVTLDAFKDKYVCFDKFLSDSHRLSYTTLLLVLQYFGPLCFIFICYFKIYIRLKRRNNMMDKMRDNKYRSSETKRINVMLLSIVVAFAVCWLPLTIFNTVFDWNHQIIATCNHNLLFLLCHLTAMISTCINPIFYGFLNKNFQRDLQFFFNFCDFRSRDDDYEVIAMSTMHTDVSKTSLKQASPVALKKIHSDDNEKI.

At 1–44 (MNSTLSSQVENHSIYYNFSEKNSQFLAFENDDCHLPLAMIFTLA) the chain is on the extracellular side. N-linked (GlcNAc...) asparagine glycans are attached at residues Asn-2, Asn-11, and Asn-17. A helical transmembrane segment spans residues 45-65 (LAYGAVIILGVSGNLALIIII). The Cytoplasmic portion of the chain corresponds to 66–76 (LKQKEMRNVTN). The chain crosses the membrane as a helical span at residues 77-97 (ILIVNLSFSDLLVAIMCLPFT). Residues 98–116 (FVYTLMDHWVFGEVMCKLN) are Extracellular-facing. Cys-113 and Cys-198 are joined by a disulfide. Residues 117–137 (PFVQCVSITVSIFSLVLIAVE) form a helical membrane-spanning segment. Residues 138–154 (RHQLIINPRGWRPSNRH) lie on the Cytoplasmic side of the membrane. Residues 155–175 (AYVGIAVIWVLAVASSLPFLI) traverse the membrane as a helical segment. Over 176-211 (YQVLTDEPFQNVTLDAFKDKYVCFDKFLSDSHRLSY) the chain is Extracellular. Residues 212–232 (TTLLLVLQYFGPLCFIFICYF) traverse the membrane as a helical segment. The Cytoplasmic portion of the chain corresponds to 233–260 (KIYIRLKRRNNMMDKMRDNKYRSSETKR). A helical membrane pass occupies residues 261-281 (INVMLLSIVVAFAVCWLPLTI). The Extracellular portion of the chain corresponds to 282–299 (FNTVFDWNHQIIATCNHN). A helical transmembrane segment spans residues 300–320 (LLFLLCHLTAMISTCINPIFY). Residues 321 to 383 (GFLNKNFQRD…KIHSDDNEKI (63 aa)) are Cytoplasmic-facing. Cys-338 carries S-palmitoyl cysteine lipidation. The residue at position 368 (Ser-368) is a Phosphoserine.

This sequence belongs to the G-protein coupled receptor 1 family.

The protein resides in the cell membrane. Receptor for neuropeptide Y and peptide YY. The chain is Neuropeptide Y receptor type 1 (NPY1R) from Sus scrofa (Pig).